The primary structure comprises 140 residues: MAKKVDKVVKLQIPAGKANPAPPVGPALGQAGVNIMGFCKEFNARTQDQAGLIIPVEISVYEDRSFTFITKTPPAPVLLKKAAGIEKGSGEPNKTKVATVTKDQVREIANSKMQDLNAADEEAAMRIIEGTARSMGIVVE.

This sequence belongs to the universal ribosomal protein uL11 family. As to quaternary structure, part of the ribosomal stalk of the 50S ribosomal subunit. Interacts with L10 and the large rRNA to form the base of the stalk. L10 forms an elongated spine to which L12 dimers bind in a sequential fashion forming a multimeric L10(L12)X complex. One or more lysine residues are methylated.

Its function is as follows. Forms part of the ribosomal stalk which helps the ribosome interact with GTP-bound translation factors. This is Large ribosomal subunit protein uL11 from Staphylococcus aureus (strain Mu3 / ATCC 700698).